Here is a 126-residue protein sequence, read N- to C-terminus: S-adenosylmethionine decarboxylase proenzyme (126 aa).

The active-site Schiff-base intermediate with substrate; via pyruvic acid is the Ser63. Ser63 bears the Pyruvic acid (Ser); by autocatalysis mark. His68 functions as the Proton acceptor; for processing activity in the catalytic mechanism. Residue Cys83 is the Proton donor; for catalytic activity of the active site.

This sequence belongs to the prokaryotic AdoMetDC family. Type 1 subfamily. As to quaternary structure, heterotetramer of two alpha and two beta chains arranged as a dimer of alpha/beta heterodimers. It depends on pyruvate as a cofactor. Post-translationally, is synthesized initially as an inactive proenzyme. Formation of the active enzyme involves a self-maturation process in which the active site pyruvoyl group is generated from an internal serine residue via an autocatalytic post-translational modification. Two non-identical subunits are generated from the proenzyme in this reaction, and the pyruvate is formed at the N-terminus of the alpha chain, which is derived from the carboxyl end of the proenzyme. The post-translation cleavage follows an unusual pathway, termed non-hydrolytic serinolysis, in which the side chain hydroxyl group of the serine supplies its oxygen atom to form the C-terminus of the beta chain, while the remainder of the serine residue undergoes an oxidative deamination to produce ammonia and the pyruvoyl group blocking the N-terminus of the alpha chain.

It catalyses the reaction S-adenosyl-L-methionine + H(+) = S-adenosyl 3-(methylsulfanyl)propylamine + CO2. It functions in the pathway amine and polyamine biosynthesis; S-adenosylmethioninamine biosynthesis; S-adenosylmethioninamine from S-adenosyl-L-methionine: step 1/1. Functionally, catalyzes the decarboxylation of S-adenosylmethionine to S-adenosylmethioninamine (dcAdoMet), the propylamine donor required for the synthesis of the polyamines spermine and spermidine from the diamine putrescine. The polypeptide is S-adenosylmethionine decarboxylase proenzyme (Clostridium tetani (strain Massachusetts / E88)).